A 112-amino-acid chain; its full sequence is Divalent-cation tolerance protein CutA (112 aa).

Cu cation contacts are provided by Cys16, His83, and His84.

The protein belongs to the CutA family. In terms of assembly, homotrimer. Cu cation serves as cofactor.

The protein localises to the cytoplasm. Its function is as follows. Involved in resistance toward heavy metals. The protein is Divalent-cation tolerance protein CutA of Shigella boydii serotype 18 (strain CDC 3083-94 / BS512).